Consider the following 130-residue polypeptide: Guanylate kinase (130 aa).

A Guanylate kinase-like domain is found at 1-130 (KIFEDPTTSY…EKIQSRVNEA (130 aa)).

Belongs to the guanylate kinase family.

The protein resides in the cytoplasm. The catalysed reaction is GMP + ATP = GDP + ADP. Functionally, essential for recycling GMP and indirectly, cGMP. This is Guanylate kinase (gmk) from Staphylococcus epidermidis.